Here is a 400-residue protein sequence, read N- to C-terminus: PHD finger protein 24 (400 aa).

Gly-2 carries N-myristoyl glycine lipidation. The tract at residues 30–108 (DRPSIRRTGE…FTPPAFIRPT (79 aa)) is disordered. Position 36 is an omega-N-methylarginine (Arg-36). Ser-43 is modified (phosphoserine). Position 47 is a phosphothreonine (Thr-47). Ser-51 carries the phosphoserine modification. Residues 78–97 (AWERLRDGRGVEPEEFDRTG) are compositionally biased toward basic and acidic residues. The PHD-type zinc-finger motif lies at 129–190 (NDEMCDVCEV…TGWSCHYCDN (62 aa)).

The sequence is that of PHD finger protein 24 from Pongo abelii (Sumatran orangutan).